The primary structure comprises 270 residues: Small ribosomal subunit protein eS1 (270 aa).

Disordered regions lie at residues 1–20 (MAVG…SKKK) and 238–270 (GGGK…QESV).

The protein belongs to the eukaryotic ribosomal protein eS1 family. In terms of assembly, component of the small ribosomal subunit. Mature ribosomes consist of a small (40S) and a large (60S) subunit. The 40S subunit contains about 33 different proteins and 1 molecule of RNA (18S). The 60S subunit contains about 49 different proteins and 3 molecules of RNA (28S, 5.8S and 5S).

It is found in the cytoplasm. The polypeptide is Small ribosomal subunit protein eS1 (Culex quinquefasciatus (Southern house mosquito)).